Reading from the N-terminus, the 481-residue chain is UDP-glycosyltransferase 72E2 (481 aa).

His-18 functions as the Proton acceptor in the catalytic mechanism. His-18 provides a ligand contact to an anthocyanidin. The active-site Charge relay is Asp-111. 6 residues coordinate UDP-alpha-D-glucose: Ala-346, Gln-348, His-363, Trp-366, Ser-368, and Glu-371. Ala-386 provides a ligand contact to an anthocyanidin. Positions 387 and 388 each coordinate UDP-alpha-D-glucose.

Belongs to the UDP-glycosyltransferase family. In terms of tissue distribution, expressed in seedlings and roots.

It carries out the reaction (E)-4-coumarate + UDP-alpha-D-glucose = 4-O-(beta-D-glucosyl)-trans-4-coumarate + UDP + H(+). The catalysed reaction is (E)-coniferol + UDP-alpha-D-glucose = 4-O-(beta-D-glucosyl)-(E)-coniferol + UDP + H(+). The enzyme catalyses (E)-sinapyl alcohol + UDP-alpha-D-glucose = 4-O-(beta-D-glucosyl)-trans-4-sinapoyl alcohol + UDP + H(+). It catalyses the reaction (E)-sinapate + UDP-alpha-D-glucose = 4-O-(beta-D-glucosyl)-trans-sinapate + UDP + H(+). It carries out the reaction (E)-coniferaldehyde + UDP-alpha-D-glucose = 4-O-(beta-D-glucosyl)-4-(E)-coniferyl aldehyde + UDP + H(+). The catalysed reaction is (E)-sinapaldehyde + UDP-alpha-D-glucose = 4-O-(beta-D-glucosyl)-4-trans-sinapoyl aldehyde + UDP + H(+). Involved in the O-glucosylation of monolignols (alcohol monomers of lignin). Glucosylates coniferyl alcohol to form coniferyl alcohol 4-O-glucoside. Glucosylates sinapyl alcohol to form sinapyl alcohol 4-O-glucoside. Glucosylates coniferyl aldehyde to form coniferyl aldehyde 4-O-glucoside. Glucosylates sinapyl aldehyde to form sinapyl aldehyde 4-O-glucoside. Possesses low activity with sinapate and ferulate as substrates. In Arabidopsis thaliana (Mouse-ear cress), this protein is UDP-glycosyltransferase 72E2.